The primary structure comprises 305 residues: Homoserine O-acetyltransferase (305 aa).

Residue cysteine 142 is the Acyl-thioester intermediate of the active site. Positions 163 and 192 each coordinate substrate. Histidine 235 serves as the catalytic Proton acceptor. Glutamate 237 is an active-site residue. A substrate-binding site is contributed by arginine 249.

This sequence belongs to the MetA family.

The protein localises to the cytoplasm. It catalyses the reaction L-homoserine + acetyl-CoA = O-acetyl-L-homoserine + CoA. Its pathway is amino-acid biosynthesis; L-methionine biosynthesis via de novo pathway; O-acetyl-L-homoserine from L-homoserine: step 1/1. In terms of biological role, transfers an acetyl group from acetyl-CoA to L-homoserine, forming acetyl-L-homoserine. The polypeptide is Homoserine O-acetyltransferase (Bacteroides thetaiotaomicron (strain ATCC 29148 / DSM 2079 / JCM 5827 / CCUG 10774 / NCTC 10582 / VPI-5482 / E50)).